Here is a 154-residue protein sequence, read N- to C-terminus: Cysteine-rich DPF motif domain-containing protein 1 (154 aa).

It belongs to the CDPF1 family.

The protein is Cysteine-rich DPF motif domain-containing protein 1 of Drosophila melanogaster (Fruit fly).